We begin with the raw amino-acid sequence, 132 residues long: Small ribosomal subunit protein uS11 (132 aa).

The protein belongs to the universal ribosomal protein uS11 family. As to quaternary structure, part of the 30S ribosomal subunit. Interacts with proteins S7 and S18. Binds to IF-3.

Its function is as follows. Located on the platform of the 30S subunit, it bridges several disparate RNA helices of the 16S rRNA. Forms part of the Shine-Dalgarno cleft in the 70S ribosome. The polypeptide is Small ribosomal subunit protein uS11 (Lachnoclostridium phytofermentans (strain ATCC 700394 / DSM 18823 / ISDg) (Clostridium phytofermentans)).